The following is a 553-amino-acid chain: MNIIDQVKQTLVEEIAASINKAGLADEIPDIKIEVPKDTKNGDYATNIAMVLTKIAKRNPREIAQAIVDNLDTEKAHVKQIDIAGPGFINFYLDNQYLTAIIPEAIEKGDQFGHVNESKGQNVLLEYVSANPTGDLHIGHARNAAVGDALANILTAAGYNVTREYYINDAGNQITNLARSIETRFFEALGDNSYSMPEDGYNGKDIIEIGKDLAEKHPEIKDYSEEARLKEFRKLGVEYEMAKLKNDLAEFNTHFDNWFSETSLYEKCEILEVLAKMKELGYTYEADGATWLRTTDFKDDKDRVLIKNDGTYTYFLPDIAYHFDKVKRGNDILIDLFGADHHGYINRLKASLETFGVDSNRLEIQIMQMVRLMENGKEVKMSKRTGNAITLREIMDEVGVDAARYFLTMRSPDSHFDFDMELAKEQSQDNPVYYAQYAHARICSILKQAKEQGIEVTAANDFTTITNEKAIELLKKVADFEPTIESAAEHRSAHRITNYIQDLASHFHKFYNAEKVLTDDIEKTKAHVAMIEAVRITLKNALAMVGVSAPESM.

The 'HIGH' region signature appears at 130 to 140 (ANPTGDLHIGH).

The protein belongs to the class-I aminoacyl-tRNA synthetase family. Monomer.

It localises to the cytoplasm. It carries out the reaction tRNA(Arg) + L-arginine + ATP = L-arginyl-tRNA(Arg) + AMP + diphosphate. The protein is Arginine--tRNA ligase of Staphylococcus aureus (strain MSSA476).